The chain runs to 273 residues: Ribosomal RNA small subunit methyltransferase A (273 aa).

Residues Asn18, Leu20, Gly45, Glu66, Asp91, and Asn113 each coordinate S-adenosyl-L-methionine.

It belongs to the class I-like SAM-binding methyltransferase superfamily. rRNA adenine N(6)-methyltransferase family. RsmA subfamily.

The protein resides in the cytoplasm. The catalysed reaction is adenosine(1518)/adenosine(1519) in 16S rRNA + 4 S-adenosyl-L-methionine = N(6)-dimethyladenosine(1518)/N(6)-dimethyladenosine(1519) in 16S rRNA + 4 S-adenosyl-L-homocysteine + 4 H(+). Functionally, specifically dimethylates two adjacent adenosines (A1518 and A1519) in the loop of a conserved hairpin near the 3'-end of 16S rRNA in the 30S particle. May play a critical role in biogenesis of 30S subunits. In Citrobacter koseri (strain ATCC BAA-895 / CDC 4225-83 / SGSC4696), this protein is Ribosomal RNA small subunit methyltransferase A.